Consider the following 609-residue polypeptide: MPEILNHTLILEKIKNLGASPGCYLWKSKKGEVLYVGKAKNLDKRVRSYLKENHPDVKTKVLQREIFDLDWIATGTEKEALILEATLIKKHNPRFNVRLKDDKKYPYICVSLSEPYPMVYVTRKLKDNGDRYFGPYSDVKSTRETLDIILRIFPVRKTRQVLPLPRPRRPCLNFDMGRCLGPCQGNIPVEDYKVIIDQVIQFLEGRKESLVSDLNIKMSNASERLDFEKAARYRDMLQRIQNFREKQTVVSLEGGDEDVIGFARKQDEGQVILLEIRGGRLETKKSFPIQGVLDAENSEILGAFFRDYYLNASLVPPCIFIPADIQDEVIPVIDVLQEKTGFRPKIKFPKGGDKRSLLKIAEKNAELGLSERLLATHYRDQTASLKEIQEMFSLERLPHIIECYDISHFQGSQPVASGVMFVEGKPFKQGYRKYNIRGYEGINDPGMIHEVISRRLQRIINEEGVFPDLIVIDGGLTQLTKACEAAVEAGAEGIPMVGLAKKREEIFFPGENEPFIFDMNSPGMKLLRHLRDEAHRFGVSHHRSRRNKETMRSLIQEVPDIGFKRSKLLLQHFSGEKKIEEATKEELLLVPGIGENLAEKILKQLQKKE.

The 79-residue stretch at 19–97 (ASPGCYLWKS…IKKHNPRFNV (79 aa)) folds into the GIY-YIG domain. The region spanning 208 to 243 (ESLVSDLNIKMSNASERLDFEKAARYRDMLQRIQNF) is the UVR domain.

Belongs to the UvrC family. Interacts with UvrB in an incision complex.

It is found in the cytoplasm. The UvrABC repair system catalyzes the recognition and processing of DNA lesions. UvrC both incises the 5' and 3' sides of the lesion. The N-terminal half is responsible for the 3' incision and the C-terminal half is responsible for the 5' incision. The chain is UvrABC system protein C from Leptospira interrogans serogroup Icterohaemorrhagiae serovar copenhageni (strain Fiocruz L1-130).